Consider the following 241-residue polypeptide: Phosphoribosyl isomerase A (241 aa).

Residue aspartate 11 is the Proton acceptor of the active site. The active-site Proton donor is aspartate 130.

This sequence belongs to the HisA/HisF family.

It is found in the cytoplasm. It carries out the reaction 1-(5-phospho-beta-D-ribosyl)-5-[(5-phospho-beta-D-ribosylamino)methylideneamino]imidazole-4-carboxamide = 5-[(5-phospho-1-deoxy-D-ribulos-1-ylimino)methylamino]-1-(5-phospho-beta-D-ribosyl)imidazole-4-carboxamide. The enzyme catalyses N-(5-phospho-beta-D-ribosyl)anthranilate = 1-(2-carboxyphenylamino)-1-deoxy-D-ribulose 5-phosphate. It participates in amino-acid biosynthesis; L-histidine biosynthesis; L-histidine from 5-phospho-alpha-D-ribose 1-diphosphate: step 4/9. Its pathway is amino-acid biosynthesis; L-tryptophan biosynthesis; L-tryptophan from chorismate: step 3/5. Its function is as follows. Involved in both the histidine and tryptophan biosynthetic pathways. The sequence is that of Phosphoribosyl isomerase A from Streptomyces griseus subsp. griseus (strain JCM 4626 / CBS 651.72 / NBRC 13350 / KCC S-0626 / ISP 5235).